A 163-amino-acid chain; its full sequence is Probable ribosome biogenesis protein RLP24 (163 aa).

This sequence belongs to the eukaryotic ribosomal protein eL24 family. As to quaternary structure, associated with nucleolar and cytoplasmic pre-60S particles. At the end of biogenesis it dissociates from cytoplasmic pre-60S particles and is likely to be exchanged for its ribosomal homolog, RPL24.

It is found in the nucleus. The protein localises to the nucleolus. Its function is as follows. Involved in the biogenesis of the 60S ribosomal subunit. Ensures the docking of GTPBP4/NOG1 to pre-60S particles. The protein is Probable ribosome biogenesis protein RLP24 (Rsl24d1) of Mus musculus (Mouse).